A 93-amino-acid polypeptide reads, in one-letter code: Small ribosomal subunit protein uS19 (93 aa).

Belongs to the universal ribosomal protein uS19 family.

Functionally, protein S19 forms a complex with S13 that binds strongly to the 16S ribosomal RNA. The polypeptide is Small ribosomal subunit protein uS19 (Microcystis aeruginosa (strain NIES-843 / IAM M-2473)).